We begin with the raw amino-acid sequence, 221 residues long: MLDRDGFRPNVGIVLLNQKNQVFWGKRIRTHSWQFPQGGIDRGETPEQAMFRELHEEVGLLPDHVRVVARTRDWLRYEVPDRYVRRDARGHYKGQKQIWYLLQLVGHDWNLNLRATNHPEFDAWRWNDYWVPLDVVIEFKRSVYALALTELARYLPRHEPRNRYLRSGMRTRDGEHAGLFLTRVMSPKPGIQLPPGACFDPIPPTGMPDEREGLPFTAMPR.

The Nudix hydrolase domain maps to 6-149 (GFRPNVGIVL…KRSVYALALT (144 aa)). The short motif at 38 to 59 (GGIDRGETPEQAMFRELHEEVG) is the Nudix box element.

The protein belongs to the Nudix hydrolase family. RppH subfamily. It depends on a divalent metal cation as a cofactor.

In terms of biological role, accelerates the degradation of transcripts by removing pyrophosphate from the 5'-end of triphosphorylated RNA, leading to a more labile monophosphorylated state that can stimulate subsequent ribonuclease cleavage. This Verminephrobacter eiseniae (strain EF01-2) protein is RNA pyrophosphohydrolase.